The sequence spans 383 residues: MKNKLPPFIEIYRALIATPSISATEEALDQSNADLITLLADWFKDLGFNVEVQPVPGTRNKFNMLASTGQGAGGLLLAGHTDTVPFDDGRWTRDPFTLTEHDGKLYGLGTADMKGFFAFILDALRDVDVTKLAKPLYILATADEETSMAGARYFAETTALRPDCAIIGEPTSLQPVRAHKGHISNAIRIQGQSGHSSDPARGVNAIELMHDAIGHILQLRDNLKERYHYEAFTVPYPTLNLGHIHGGDASNRICACCELHMDIRPLPGMTLNELNGLLNDALAPVSERWPGRLTVDELHPPIPGYECPPNHQLVEVVEKLLGAKTEVVNYCTEAPFIQTLCPTLVLGPGSINQAHQPDEYLETRFIKPTRELITQVIHHFCWH.

His-80 is a binding site for Zn(2+). The active site involves Asp-82. Zn(2+) is bound at residue Asp-112. Glu-144 is an active-site residue. Residues Glu-145, Glu-169, and His-355 each contribute to the Zn(2+) site.

It belongs to the peptidase M20A family. ArgE subfamily. In terms of assembly, homodimer. Zn(2+) is required as a cofactor. It depends on Co(2+) as a cofactor. The cofactor is glutathione.

It localises to the cytoplasm. The catalysed reaction is N(2)-acetyl-L-ornithine + H2O = L-ornithine + acetate. It participates in amino-acid biosynthesis; L-arginine biosynthesis; L-ornithine from N(2)-acetyl-L-ornithine (linear): step 1/1. Its function is as follows. Catalyzes the hydrolysis of the amide bond of N(2)-acetylated L-amino acids. Cleaves the acetyl group from N-acetyl-L-ornithine to form L-ornithine, an intermediate in L-arginine biosynthesis pathway, and a branchpoint in the synthesis of polyamines. The chain is Acetylornithine deacetylase from Escherichia coli O7:K1 (strain IAI39 / ExPEC).